A 464-amino-acid polypeptide reads, in one-letter code: Cystathionine beta-lyase, chloroplastic (464 aa).

A chloroplast-targeting transit peptide spans 1–55 (MTSSLSLHSSFVPSFADLSDRGLISKNSPTSVSISKVPTWEKKQISNRNSFKLNC). Residues Tyr-127, Arg-129, Gly-157, Met-158, Ser-275, and Thr-277 each coordinate pyridoxal 5'-phosphate. Lys-278 is modified (N6-(pyridoxal phosphate)lysine).

The protein belongs to the trans-sulfuration enzymes family. Forms homodimers. May form homotetramers from two homodimers. It depends on pyridoxal 5'-phosphate as a cofactor.

It localises to the plastid. The protein resides in the chloroplast. It catalyses the reaction L,L-cystathionine + H2O = L-homocysteine + pyruvate + NH4(+). The catalysed reaction is an S-substituted L-cysteine + H2O = a thiol + pyruvate + NH4(+). Its pathway is amino-acid biosynthesis; L-methionine biosynthesis via de novo pathway; L-homocysteine from L-cystathionine: step 1/1. Catalyzes the penultimate step in the de novo biosynthesis of methionine. Its role in methionine metabolism may affect plant development in different organs, probably by modifying plant auxin transport. Its cysteine desulfhydrase activity may be involved in hydrogen sulfur production using L-cysteine as a substrate. This is Cystathionine beta-lyase, chloroplastic from Arabidopsis thaliana (Mouse-ear cress).